Consider the following 388-residue polypeptide: Succinate--CoA ligase [ADP-forming] subunit beta (388 aa).

The 236-residue stretch at 9–244 (KQLFARYGLP…QSQEDPREAQ (236 aa)) folds into the ATP-grasp domain. ATP contacts are provided by residues K46, 53–55 (GRG), E99, T102, and E107. Positions 199 and 213 each coordinate Mg(2+). Residues N264 and 321–323 (GIV) each bind substrate.

This sequence belongs to the succinate/malate CoA ligase beta subunit family. Heterotetramer of two alpha and two beta subunits. The cofactor is Mg(2+).

The catalysed reaction is succinate + ATP + CoA = succinyl-CoA + ADP + phosphate. The enzyme catalyses GTP + succinate + CoA = succinyl-CoA + GDP + phosphate. It participates in carbohydrate metabolism; tricarboxylic acid cycle; succinate from succinyl-CoA (ligase route): step 1/1. In terms of biological role, succinyl-CoA synthetase functions in the citric acid cycle (TCA), coupling the hydrolysis of succinyl-CoA to the synthesis of either ATP or GTP and thus represents the only step of substrate-level phosphorylation in the TCA. The beta subunit provides nucleotide specificity of the enzyme and binds the substrate succinate, while the binding sites for coenzyme A and phosphate are found in the alpha subunit. This Klebsiella pneumoniae (strain 342) protein is Succinate--CoA ligase [ADP-forming] subunit beta.